The sequence spans 1052 residues: Germline survival defective-1 (1052 aa).

Residues 1–25 form the signal peptide; the sequence is MRCLISYLFHSFLIFLKFIRSDVTA. 5 disordered regions span residues 41-320, 478-543, 667-689, 933-965, and 1033-1052; these read LMKS…DPKN, VNGI…QSVP, PSSQ…EEFE, KQTL…NSYA, and SNNT…NSNF. Low complexity predominate over residues 67–145; sequence ATATAAATTQ…SSTSSTSQQT (79 aa). The span at 163–172 shows a compositional bias: polar residues; the sequence is TSNTANSQSG. Positions 178-190 are enriched in basic and acidic residues; it reads TNKDRPKEKEKNT. Positions 244 to 279 are enriched in low complexity; the sequence is NAKSSGFLSNSSLSSAGQISASSAPPVSTTPTAIPI. The segment covering 305 to 320 has biased composition (basic and acidic residues); sequence KRDEEPMPYKSTDPKN. The segment at 424-732 is gld-4 binding; the sequence is QHPPGLPPLL…QIEKNDNLFS (309 aa). Positions 480–514 are enriched in polar residues; the sequence is GISNNIPSDRQQLDSKPNTARGSSGNINQSNTTSP. Positions 674–689 are enriched in acidic residues; sequence DENDTDSDHESEEEFE. The interval 892 to 1052 is gld-3 binding; sequence PIELPVNMQP…SGGGNQNSNF (161 aa). The span at 950–963 shows a compositional bias: low complexity; that stretch reads EGSQQNGGTSSSNS. Over residues 1038 to 1052 the composition is skewed to gly residues; the sequence is GVNGNSGGGNQNSNF.

Isoform C interacts (via C-terminus) with gld-3 isoform A (via C-terminus) in an RNA-independent manner. Isoform C interacts with gld-4. As to expression, expressed in the germline (at protein level). In the early embryo is expressed in all cells, then becomes gradually restricted to the germ cell lineage and enriches in P granules (at protein level). In adult hermaphrodites, is expressed in the mitotic region, accumulates during early stages of meiotic prophase I and is slightly less abundant in maturing oocytes (at protein level).

The protein localises to the cytoplasm. The protein resides in the cytoplasmic granule. Required maternally for germline survival by forming a maternal complex with gld-3. During hermaphrodite development forms a complex with gld-3 which promotes the sperm/oocyte switch freeing the translational repressor fbf to turn off sperm promoting factors. Required for proper oocyte differentiation and oogenic meiotic arrest. Stimulates the enzymatic activity of gld-4 and together they prevent gld-1 mRNA degradation. This is Germline survival defective-1 from Caenorhabditis elegans.